We begin with the raw amino-acid sequence, 426 residues long: Tektin-1 (426 aa).

Coiled-coil stretches lie at residues 21–84, 268–307, and 339–383; these read KNQY…LEQL, LKET…LDQE, and KEVG…ENTI. The disordered stretch occupies residues 396–426; it reads SNPLRDGGDQGQWARACAPTPSAEDGTSHTD.

It belongs to the tektin family. As to quaternary structure, microtubule inner protein component of sperm flagellar doublet microtubules. In terms of processing, ubiquitinated, leading to its degradation. Deubiquitinated by USP16, promoting its stability.

The protein localises to the cytoplasm. Its subcellular location is the cytoskeleton. It is found in the cilium axoneme. The protein resides in the flagellum axoneme. Microtubule inner protein (MIP) part of the dynein-decorated doublet microtubules (DMTs) in cilia and flagellar axoneme. Forms filamentous polymers in the walls of ciliary and flagellar microtubules. This chain is Tektin-1 (TEKT1), found in Canis lupus familiaris (Dog).